The chain runs to 110 residues: UPF0122 protein BCA_3946 (110 aa).

The protein belongs to the UPF0122 family.

Might take part in the signal recognition particle (SRP) pathway. This is inferred from the conservation of its genetic proximity to ftsY/ffh. May be a regulatory protein. The chain is UPF0122 protein BCA_3946 from Bacillus cereus (strain 03BB102).